A 679-amino-acid chain; its full sequence is Enzymatic polyprotein (679 aa).

The protease stretch occupies residues 40 to 130 (LHCFVDTGAS…LYEPFIQFTD (91 aa)). Asp45 is a catalytic residue. A Reverse transcriptase domain is found at 272 to 452 (LKVIKPSKSP…KKINFLGLEI (181 aa)).

It belongs to the caulimoviridae enzymatic polyprotein family.

The catalysed reaction is DNA(n) + a 2'-deoxyribonucleoside 5'-triphosphate = DNA(n+1) + diphosphate. In terms of biological role, encodes for at least two polypeptides: protease (PR) and reverse transcriptase (RT). The protease processes the polyprotein in cis. Reverse transcriptase is multifunctional enzyme that converts the viral RNA genome into dsDNA in viral cytoplasmic capsids. This enzyme displays a DNA polymerase activity that can copy either DNA or RNA templates, and a ribonuclease H (RNase H) activity that cleaves the RNA strand of RNA-DNA heteroduplexes in a partially processive 3'- to 5'-endonucleasic mode. Neo-synthesized pregenomic RNA (pgRNA) are encapsidated, and reverse-transcribed inside the nucleocapsid. Partial (+)DNA is synthesized from the (-)DNA template and generates the relaxed circular DNA (RC-DNA) genome. After budding and infection, the RC-DNA migrates in the nucleus, and is converted into a plasmid-like covalently closed circular DNA (cccDNA). The sequence is that of Enzymatic polyprotein from Arabidopsis thaliana (Mouse-ear cress).